Consider the following 1170-residue polypeptide: RNA-binding protein 33 (1170 aa).

Disordered stretches follow at residues 1–152 and 199–221; these read MAAA…EGHE and KDIK…LRFK. Position 2 is an N-acetylalanine (alanine 2). Basic and acidic residues predominate over residues 20-36; the sequence is QFDKPGAERSWRRRAAD. Over residues 37-49 the composition is skewed to acidic residues; sequence EDWDSELEDDLLG. A Phosphoserine modification is found at serine 41. Polar residues predominate over residues 82-108; sequence FSSQGVTISLNATSGMVTSFELSDNTN. 2 stretches are compositionally biased toward acidic residues: residues 112–126 and 203–214; these read GEQE…GEDE and EESDEEEEDDEE. A phosphoserine mark is found at serine 205 and serine 233. Disordered stretches follow at residues 259–708, 721–784, 833–863, and 942–1050; these read FEER…NSNL, MSSS…PDED, QLYA…PFPG, and AVPQ…VPPG. Residues 267–278 are compositionally biased toward basic residues; that stretch reads KQGRYSSRRGGR. A compositionally biased stretch (basic and acidic residues) spans 289-306; the sequence is GDQRRESTERGRMKDHRP. Residues 311-329 are compositionally biased toward pro residues; it reads TQPPVVPQAPPPPPPPPQQ. 3 stretches are compositionally biased toward low complexity: residues 335–348, 357–372, and 394–403; these read LFQP…LPVQ, QGMH…RMMM, and TVVTPVQVPL. A compositionally biased stretch (pro residues) spans 419 to 433; that stretch reads FPGPPEFPQHTPGPV. Asymmetric dimethylarginine is present on arginine 470. Pro residues-rich tracts occupy residues 481 to 490, 554 to 568, and 582 to 630; these read SPPPPPPPPT, FIPP…PGQP, and LHPP…PQHP. Residues 632 to 642 show a composition bias toward basic residues; the sequence is QHQHHHHHHHL. 2 stretches are compositionally biased toward polar residues: residues 662-708 and 721-732; these read QTAQ…NSNL and MSSSRCSATPSA. A phosphoserine mark is found at serine 741 and serine 765. Positions 789-835 form a coiled coil; the sequence is LYRLKIEEQKRLREEILKQKELRRQQQAGARKKELLERLAQQQQQLY. Serine 951 carries the phosphoserine modification. Residue lysine 960 forms a Glycyl lysine isopeptide (Lys-Gly) (interchain with G-Cter in SUMO2) linkage. A phosphoserine mark is found at serine 973 and serine 991. Position 1028 is an asymmetric dimethylarginine; alternate (arginine 1028). Arginine 1028 is modified (omega-N-methylarginine; alternate). The region spanning 1098 to 1170 is the RRM domain; that stretch reads CVVSVEGLSS…SHINVALIVE (73 aa).

Associates with the NXF1-NXT1 RNA export complex. Interacts with ALKBH5; facilitating ALKBH5 recruitment to m6A-containing transcripts. Interacts with SENP1; promoting ALKBH5 deSUMOylation and subsequent activation.

Its subcellular location is the nucleus. The protein resides in the cytoplasm. Its function is as follows. RNA reader protein, which recognizes and binds specific RNAs, thereby regulating RNA metabolic processes, such as mRNA export, mRNA stability and/or translation. Binds a subset of intronless RNAs containing GC-rich elements, such as NORAD, and promotes their nuclear export by recruiting target RNAs to components of the NXF1-NXT1 RNA export machinery. Specifically recognizes and binds N6-methyladenosine (m6A)-containing mRNAs, promoting their demethylation by ALKBH5. Acts as an molecular adapter, which (1) promotes ALKBH5 recruitment to m6A-containing transcripts and (2) activates ALKBH5 demethylase activity by recruiting SENP1, leading to ALKBH5 deSUMOylation and subsequent activation. This chain is RNA-binding protein 33, found in Homo sapiens (Human).